Consider the following 165-residue polypeptide: Type 3 secretion system regulator YopR (165 aa).

This sequence belongs to the YopR family.

It is found in the secreted. In terms of biological role, may be involved in the regulation of the assembly of the type III secretion system (T3SS), also called injectisome, which is used to inject bacterial effector proteins into eukaryotic host cells. May control the secretion and/or polymerization of YscF/SctF, the principal component of the needle filament, thereby impacting the assembly of the T3SS. Involved in pathogenesis. The protein is Type 3 secretion system regulator YopR of Yersinia pseudotuberculosis serotype I (strain IP32953).